We begin with the raw amino-acid sequence, 141 residues long: Aspartate 1-decarboxylase 1 (141 aa).

The active-site Schiff-base intermediate with substrate; via pyruvic acid is Ser-25. At Ser-25 the chain carries Pyruvic acid (Ser). Thr-57 provides a ligand contact to substrate. Catalysis depends on Tyr-58, which acts as the Proton donor. 73–75 serves as a coordination point for substrate; sequence GPA.

The protein belongs to the PanD family. Heterooctamer of four alpha and four beta subunits. Pyruvate serves as cofactor. Post-translationally, is synthesized initially as an inactive proenzyme, which is activated by self-cleavage at a specific serine bond to produce a beta-subunit with a hydroxyl group at its C-terminus and an alpha-subunit with a pyruvoyl group at its N-terminus.

The protein localises to the cytoplasm. It catalyses the reaction L-aspartate + H(+) = beta-alanine + CO2. Its pathway is cofactor biosynthesis; (R)-pantothenate biosynthesis; beta-alanine from L-aspartate: step 1/1. Functionally, catalyzes the pyruvoyl-dependent decarboxylation of aspartate to produce beta-alanine. The polypeptide is Aspartate 1-decarboxylase 1 (Paenarthrobacter aurescens (strain TC1)).